A 138-amino-acid chain; its full sequence is Thyrotropin subunit beta (138 aa).

Positions 1–20 (MTALFLMSMLFGLTCGQAMS) are cleaved as a signal peptide. 6 cysteine pairs are disulfide-bonded: Cys-22–Cys-72, Cys-36–Cys-87, Cys-39–Cys-125, Cys-47–Cys-103, Cys-51–Cys-105, and Cys-108–Cys-115. Asn-43 carries N-linked (GlcNAc...) asparagine glycosylation. The propeptide occupies 133–138 (LVGFSV).

This sequence belongs to the glycoprotein hormones subunit beta family. In terms of assembly, heterodimer of a common alpha chain and a unique beta chain which confers biological specificity to thyrotropin, lutropin, follitropin and gonadotropin.

It localises to the secreted. Its function is as follows. Indispensable for the control of thyroid structure and metabolism. The protein is Thyrotropin subunit beta (TSHB) of Homo sapiens (Human).